The following is a 424-amino-acid chain: Bone morphogenetic protein 10 (424 aa).

Residues Met-1–Gly-21 form the signal peptide. Positions Ser-22–Arg-316 are excised as a propeptide. Asn-67 and Asn-131 each carry an N-linked (GlcNAc...) asparagine glycan. 3 disulfides stabilise this stretch: Cys-323/Cys-389, Cys-352/Cys-421, and Cys-356/Cys-423.

It belongs to the TGF-beta family. As to quaternary structure, homodimer; disulfide-linked. Interacts with FBN1 (via N-terminal domain) and FBN2. Interacts with ENG. As to expression, detected in mammary epithelia (at protein level).

The protein resides in the secreted. Functionally, required for maintaining the proliferative activity of embryonic cardiomyocytes by preventing premature activation of the negative cell cycle regulator CDKN1C/p57KIP and maintaining the required expression levels of cardiogenic factors such as MEF2C and NKX2-5. Acts as a ligand for ACVRL1/ALK1, BMPR1A/ALK3 and BMPR1B/ALK6, leading to activation of SMAD1, SMAD5 and SMAD8 transcription factors. Inhibits endothelial cell migration and growth. May reduce cell migration and cell matrix adhesion in breast cancer cell lines. The polypeptide is Bone morphogenetic protein 10 (BMP10) (Homo sapiens (Human)).